A 241-amino-acid chain; its full sequence is E3 ubiquitin-protein ligase RNF166 (241 aa).

Residues 8–30 (VASSQHRQHHSHQSLATPSSADS) form a disordered region. The segment at 37–77 (CPICLEVYYKPVAIGSCGHTFCGECLQPCLQVSSPLCPLCR) adopts an RING-type zinc-finger fold. 4 residues coordinate Zn(2+): Cys-102, Cys-105, His-117, and Cys-121. The C2HC RNF-type zinc-finger motif lies at 102 to 121 (CRGCSKKVTLAKMRAHISSC). One can recognise a UIM domain in the interval 225 to 241 (DEEAALQAALALSLSEN).

It localises to the cytoplasm. The catalysed reaction is S-ubiquitinyl-[E2 ubiquitin-conjugating enzyme]-L-cysteine + [acceptor protein]-L-lysine = [E2 ubiquitin-conjugating enzyme]-L-cysteine + N(6)-ubiquitinyl-[acceptor protein]-L-lysine.. Its pathway is protein modification; protein ubiquitination. Functionally, E3 ubiquitin-protein ligase that promotes the ubiquitination of different substrates. This is E3 ubiquitin-protein ligase RNF166 (rnf166) from Xenopus laevis (African clawed frog).